A 546-amino-acid polypeptide reads, in one-letter code: ATP-dependent RNA helicase DBP2 (546 aa).

The disordered stretch occupies residues 1–56 (MTYGGRDQQYNKTNYKSRGGDFRGGRNSDRNSYNDRPQGGNYRGGFGGRSNYNQPQ). 2 positions are modified to omega-N-methylarginine: Arg-18 and Arg-43. Residues 18–33 (RGGDFRGGRNSDRNSY) are compositionally biased toward basic and acidic residues. Phosphoserine occurs at positions 88 and 90. The short motif at 113–141 (TTFDEAGFPDYVLNEVKAEGFDKPTGIQC) is the Q motif element. A Helicase ATP-binding domain is found at 144–319 (WPMALSGRDM…ADYLNDPIQV (176 aa)). 157–164 (AATGSGKT) is an ATP binding site. The DEAD box signature appears at 267–270 (DEAD). Residues 347–494 (RLNKYLETAS…NIPPELLKYD (148 aa)) enclose the Helicase C-terminal domain. Residue Lys-474 forms a Glycyl lysine isopeptide (Lys-Gly) (interchain with G-Cter in ubiquitin) linkage. The disordered stretch occupies residues 493–546 (YDRRSYGGGHPRYGGGRGGRGGYGRRGGYGGGRGGYGGNRQRDGGWGNRGRSNY). The segment covering 498–540 (YGGGHPRYGGGRGGRGGYGRRGGYGGGRGGYGGNRQRDGGWGN) has biased composition (gly residues). Positions 505 to 530 (YGGGRGGRGGYGRRGGYGGGRGGYGG) are RNA-binding RGG-box. 4 positions are modified to dimethylated arginine; alternate: Arg-509, Arg-512, Arg-518, and Arg-525. Residues Arg-509, Arg-512, Arg-518, and Arg-525 each carry the omega-N-methylarginine; alternate modification.

Belongs to the DEAD box helicase family. DDX5/DBP2 subfamily. Interacts with UPF1. Associates with polysomes.

The protein localises to the cytoplasm. The protein resides in the nucleus. It carries out the reaction ATP + H2O = ADP + phosphate + H(+). In terms of biological role, ATP-dependent RNA helicase involved nonsense-mediated mRNA decay and ribosome biogenesis through rRNA processing. Associates directly with chromatin, correlating with transcriptional activity. Required for assembly of mRNA-binding proteins YRA1, NAB2, and MEX67 onto poly(A)+ RNA. The polypeptide is ATP-dependent RNA helicase DBP2 (Saccharomyces cerevisiae (strain ATCC 204508 / S288c) (Baker's yeast)).